Reading from the N-terminus, the 132-residue chain is Large ribosomal subunit protein bL19 (132 aa).

This sequence belongs to the bacterial ribosomal protein bL19 family.

This protein is located at the 30S-50S ribosomal subunit interface and may play a role in the structure and function of the aminoacyl-tRNA binding site. The chain is Large ribosomal subunit protein bL19 from Rhodospirillum centenum (strain ATCC 51521 / SW).